We begin with the raw amino-acid sequence, 85 residues long: Neurotoxin beta-KTx 17 (85 aa).

A signal peptide spans 1–20; sequence MKQYIFFLALIVLVSTFAEA. The propeptide occupies 21 to 37; sequence GKKTEILDKVKKVFSKG. One can recognise a BetaSPN-type CS-alpha/beta domain in the interval 49–85; that stretch reads ELGCPFIEKWCEDHCESKKQVGKCENFDCSCVKLGGK. 3 disulfides stabilise this stretch: cysteine 52-cysteine 72, cysteine 59-cysteine 77, and cysteine 63-cysteine 79.

It belongs to the long chain scorpion toxin family. Class 2 subfamily. In terms of tissue distribution, expressed by the venom gland.

Its subcellular location is the secreted. Its function is as follows. Has a very weak effect to block voltage-gated potassium channel Kv1.1/KCNA1. This is Neurotoxin beta-KTx 17 from Lychas mucronatus (Chinese swimming scorpion).